Reading from the N-terminus, the 760-residue chain is uncharacterized protein (760 aa).

A signal peptide spans 1–20 (MKFKLFLGSSFFGVATLLIA). Residue Cys21 is the site of N-palmitoyl cysteine attachment. Residue Cys21 is the site of S-diacylglycerol cysteine attachment. Disordered stretches follow at residues 221–243 (ENAANGTTEKAEKTVSASSLQLK), 272–315 (AKTN…TSDD), and 705–741 (IKATSKEGEQNQGKKGDGAQNQGKKGDGAQNGKNDKA). Residues 272 to 284 (AKTNGEKGNEKQE) are compositionally biased toward basic and acidic residues. Over residues 300-312 (KNTSQDKTQNTQT) the composition is skewed to polar residues. The span at 705–721 (IKATSKEGEQNQGKKGD) shows a compositional bias: basic and acidic residues.

It belongs to the MG185/MG260 family.

The protein resides in the cell membrane. This is an uncharacterized protein from Mycoplasma pneumoniae (strain ATCC 29342 / M129 / Subtype 1) (Mycoplasmoides pneumoniae).